An 81-amino-acid chain; its full sequence is Conotoxin ViKr92 (81 aa).

An N-terminal signal peptide occupies residues 1 to 22 (MKLTWMMIVAVLFLTAWTFVTA). Positions 23–51 (DDTRYKLENPFLKARNELQKLEASQLNER) are excised as a propeptide. 3 disulfide bridges follow: cysteine 53/cysteine 70, cysteine 60/cysteine 74, and cysteine 69/cysteine 78.

Belongs to the conotoxin O1 superfamily. Expressed by the venom duct.

The protein resides in the secreted. The polypeptide is Conotoxin ViKr92 (Conus virgo (Virgin cone)).